Consider the following 608-residue polypeptide: Tyrosyl-DNA phosphodiesterase 1 (608 aa).

Residues 1–101 (MSQEGDYGRW…SDDELQPEMP (101 aa)) are disordered. Ser-61 carries the post-translational modification Phosphoserine. Thr-147 bears the Phosphothreonine mark. At Ser-148 the chain carries Phosphoserine. His-263 acts as the Nucleophile in catalysis. Substrate is bound at residue Lys-265. The tract at residues 400–403 (SVGS) is interaction with DNA. His-493 functions as the Proton donor/acceptor in the catalytic mechanism. Lys-495 is a substrate binding site.

Belongs to the tyrosyl-DNA phosphodiesterase family. As to quaternary structure, monomer. Post-translationally, phosphorylated on serine and/or threonine residues, but not on tyrosine residues. Ubiquitously expressed. Similar expression throughout the central nervous system (whole brain, amygdala, caudate nucleus, cerebellum, cerebral cortex, frontal lobe, hippocampus, medulla oblongata, occipital lobe, putamen, substantia nigra, temporal lobe, thalamus, nucleus accumbens and spinal cord) and increased expression in testis and thymus.

The protein localises to the nucleus. It localises to the cytoplasm. DNA repair enzyme that can remove a variety of covalent adducts from DNA through hydrolysis of a 3'-phosphodiester bond, giving rise to DNA with a free 3' phosphate. Catalyzes the hydrolysis of dead-end complexes between DNA and the topoisomerase I active site tyrosine residue. Hydrolyzes 3'-phosphoglycolates on protruding 3' ends on DNA double-strand breaks due to DNA damage by radiation and free radicals. Acts on blunt-ended double-strand DNA breaks and on single-stranded DNA. Has low 3'exonuclease activity and can remove a single nucleoside from the 3'end of DNA and RNA molecules with 3'hydroxyl groups. Has no exonuclease activity towards DNA or RNA with a 3'phosphate. The sequence is that of Tyrosyl-DNA phosphodiesterase 1 (TDP1) from Homo sapiens (Human).